A 347-amino-acid chain; its full sequence is 3',5'-bisphosphate nucleotidase 2 (347 aa).

The active-site Proton acceptor is Asp-46. Residues Glu-71, Asp-134, Ile-136, and Asp-137 each contribute to the Mg(2+) site. Thr-139 acts as the Proton acceptor in catalysis. Adenosine 3',5'-bisphosphate is bound by residues Thr-139, Ser-255, Lys-258, Arg-272, and Asp-284. AMP is bound by residues Ser-255, Lys-258, Arg-272, and Asp-284. Asp-284 serves as a coordination point for Mg(2+).

The protein belongs to the inositol monophosphatase superfamily. It depends on Mg(2+) as a cofactor. In terms of tissue distribution, very low expression in roots, leaves, stems, flowers and siliques.

The enzyme catalyses adenosine 3',5'-bisphosphate + H2O = AMP + phosphate. The catalysed reaction is 3'-phosphoadenylyl sulfate + H2O = adenosine 5'-phosphosulfate + phosphate. It carries out the reaction 1D-myo-inositol 1,4-bisphosphate + H2O = 1D-myo-inositol 4-phosphate + phosphate. The protein operates within signal transduction; phosphatidylinositol signaling pathway. Its activity is regulated as follows. Inhibited by Li(+) (IC(50)=10 mM), Na(+) (IC(50)=200 mM) and Ca(2+) (IC(50)=0.03 mM). Functionally, phosphatase that converts adenosine 3'-phosphate 5'-phosphosulfate (PAPS) to adenosine 5'-phosphosulfate (APS) and 3'-phosphoadenosine 5'-phosphate (3'-PAP) to AMP. May regulate the flux of sulfur in the sulfur-activation pathway by converting PAPS to APS. Prevents both the toxicity of PAP on RNA processing enzymes as well as the product inhibition by PAP of sulfate conjugation. Is also able to hydrolyze inositol 1,4-bisphosphate. This chain is 3',5'-bisphosphate nucleotidase 2, found in Arabidopsis thaliana (Mouse-ear cress).